The primary structure comprises 411 residues: Translation initiation factor 2 subunit gamma (411 aa).

In terms of domain architecture, tr-type G spans 9–201; it reads QPTVNIGMVG…AIEKYIPTPE (193 aa). The tract at residues 18–25 is G1; that stretch reads GHVDHGKS. Mg(2+) is bound by residues aspartate 21, serine 25, glycine 46, and serine 48. 21-26 contributes to the GTP binding site; the sequence is DHGKST. The G2 stretch occupies residues 46–50; sequence GISIK. The interval 88 to 91 is G3; it reads DAPG. GTP-binding positions include 144–147 and 179–181; these read NKID and SAY. Residues 144 to 147 are G4; it reads NKID. Residues 179–181 are G5; that stretch reads SAY.

It belongs to the TRAFAC class translation factor GTPase superfamily. Classic translation factor GTPase family. EIF2G subfamily. In terms of assembly, heterotrimer composed of an alpha, a beta and a gamma chain. Requires Mg(2+) as cofactor.

It carries out the reaction GTP + H2O = GDP + phosphate + H(+). In terms of biological role, eIF-2 functions in the early steps of protein synthesis by forming a ternary complex with GTP and initiator tRNA. This chain is Translation initiation factor 2 subunit gamma, found in Thermoplasma volcanium (strain ATCC 51530 / DSM 4299 / JCM 9571 / NBRC 15438 / GSS1).